A 182-amino-acid polypeptide reads, in one-letter code: Small ribosomal subunit protein uS4c (182 aa).

A disordered region spans residues 13–34 (GLTSKRPRSGSDPKNQLRSGKR). Residues 82 to 143 (MRLDNILFRL…KQRSKALIQN (62 aa)) enclose the S4 RNA-binding domain.

The protein belongs to the universal ribosomal protein uS4 family. As to quaternary structure, part of the 30S ribosomal subunit. Contacts protein S5. The interaction surface between S4 and S5 is involved in control of translational fidelity.

The protein localises to the plastid. It is found in the chloroplast. Functionally, one of the primary rRNA binding proteins, it binds directly to 16S rRNA where it nucleates assembly of the body of the 30S subunit. In terms of biological role, with S5 and S12 plays an important role in translational accuracy. The chain is Small ribosomal subunit protein uS4c (rps4) from Iris lutescens (Crimean iris).